Reading from the N-terminus, the 564-residue chain is Pachytene checkpoint protein 2 (564 aa).

314-321 (GPPGTGKT) contributes to the ATP binding site.

This sequence belongs to the AAA ATPase family. PCH2 subfamily.

Its subcellular location is the nucleus. The protein localises to the nucleolus. It is found in the chromosome. Its function is as follows. Required for the pachytene checkpoint, the meiotic checkpoint that prevents chromosome segregation when defects in recombination and synaptonemal complex formation occurred. Represses meiotic recombination in the rDNA, probably by excluding the meiosis-specific protein HOP1 from the nucleolar region. This Saccharomyces cerevisiae (strain ATCC 204508 / S288c) (Baker's yeast) protein is Pachytene checkpoint protein 2 (PCH2).